The primary structure comprises 271 residues: Mannosyl-3-phosphoglycerate phosphatase (271 aa).

Asp-13 acts as the Nucleophile in catalysis. The Mg(2+) site is built by Asp-13, Asp-15, and Asp-214.

The protein belongs to the HAD-like hydrolase superfamily. MPGP family. It depends on Mg(2+) as a cofactor.

It is found in the cytoplasm. The enzyme catalyses 2-O-(alpha-D-mannosyl)-3-phosphoglycerate + H2O = (2R)-2-O-(alpha-D-mannosyl)-glycerate + phosphate. This is Mannosyl-3-phosphoglycerate phosphatase from Escherichia coli (strain SE11).